A 214-amino-acid polypeptide reads, in one-letter code: Probable transaldolase (214 aa).

The active-site Schiff-base intermediate with substrate is the Lys83.

The protein belongs to the transaldolase family. Type 3B subfamily.

Its subcellular location is the cytoplasm. It catalyses the reaction D-sedoheptulose 7-phosphate + D-glyceraldehyde 3-phosphate = D-erythrose 4-phosphate + beta-D-fructose 6-phosphate. It functions in the pathway carbohydrate degradation; pentose phosphate pathway; D-glyceraldehyde 3-phosphate and beta-D-fructose 6-phosphate from D-ribose 5-phosphate and D-xylulose 5-phosphate (non-oxidative stage): step 2/3. In terms of biological role, transaldolase is important for the balance of metabolites in the pentose-phosphate pathway. This is Probable transaldolase from Clostridium tetani (strain Massachusetts / E88).